The following is a 122-amino-acid chain: Large ribosomal subunit protein bL12 (122 aa).

Residues 96 to 122 (APKSLKTGLSKDEANEMKKKLEDAGAT) are disordered. The segment covering 104-122 (LSKDEANEMKKKLEDAGAT) has biased composition (basic and acidic residues).

Belongs to the bacterial ribosomal protein bL12 family. As to quaternary structure, homodimer. Part of the ribosomal stalk of the 50S ribosomal subunit. Forms a multimeric L10(L12)X complex, where L10 forms an elongated spine to which 2 to 4 L12 dimers bind in a sequential fashion. Binds GTP-bound translation factors.

Functionally, forms part of the ribosomal stalk which helps the ribosome interact with GTP-bound translation factors. Is thus essential for accurate translation. The chain is Large ribosomal subunit protein bL12 from Liberibacter asiaticus (Citrus greening disease).